The primary structure comprises 236 residues: Ribosome maturation protein SDO1 homolog (236 aa).

The protein belongs to the SDO1/SBDS family.

The sequence is that of Ribosome maturation protein SDO1 homolog from Pyrococcus horikoshii (strain ATCC 700860 / DSM 12428 / JCM 9974 / NBRC 100139 / OT-3).